The following is a 504-amino-acid chain: Plasma protease C1 inhibitor (504 aa).

The N-terminal stretch at 1–22 is a signal peptide; sequence MASRLTPLTLLLLLLAGDRAFS. The segment at 22-67 is disordered; the sequence is SDPEATSHSTQDPLEAQAKSRESFPERDDSWSPPEPTVLPSTWPTT. The span at 39 to 51 shows a compositional bias: basic and acidic residues; the sequence is AKSRESFPERDDS. 3 N-linked (GlcNAc...) asparagine glycosylation sites follow: N75, N83, and N107. Positions 85–124 are enriched in polar residues; that stretch reads SFSQHSQPAAQLPTDSPGQPPLNSSSQPSTASDLPTQATT. The segment at 85–141 is disordered; the sequence is SFSQHSQPAAQLPTDSPGQPPLNSSSQPSTASDLPTQATTEPFCPEPLAQCSDSDRD. 2 disulfides stabilise this stretch: C128–C432 and C135–C210. 2 N-linked (GlcNAc...) asparagine glycosylation sites follow: N243 and N356.

Belongs to the serpin family. As to quaternary structure, interacts with MASP1.

Its subcellular location is the secreted. Serine protease inhibitor, which acrs as a regulator of the classical complement pathway. Forms a proteolytically inactive stoichiometric complex with the C1r or C1s proteases. May also regulate blood coagulation, fibrinolysis and the generation of kinins. Very efficient inhibitor of FXIIa. Inhibits chymotrypsin and kallikrein. The sequence is that of Plasma protease C1 inhibitor (Serping1) from Mus musculus (Mouse).